The following is a 430-amino-acid chain: tRNA(Ile)-lysidine synthase (430 aa).

Residue 27 to 32 (SGGSDS) participates in ATP binding.

This sequence belongs to the tRNA(Ile)-lysidine synthase family.

The protein resides in the cytoplasm. It carries out the reaction cytidine(34) in tRNA(Ile2) + L-lysine + ATP = lysidine(34) in tRNA(Ile2) + AMP + diphosphate + H(+). Ligates lysine onto the cytidine present at position 34 of the AUA codon-specific tRNA(Ile) that contains the anticodon CAU, in an ATP-dependent manner. Cytidine is converted to lysidine, thus changing the amino acid specificity of the tRNA from methionine to isoleucine. The chain is tRNA(Ile)-lysidine synthase from Rickettsia akari (strain Hartford).